The chain runs to 492 residues: Ferruginol synthase (492 aa).

The chain crosses the membrane as a helical span at residues 1-21; that stretch reads MDPFPLVAAALFIAATWFITF. C436 contributes to the heme binding site.

Belongs to the cytochrome P450 family. Heme is required as a cofactor. As to expression, expressed in leaf glandular trichomes.

Its subcellular location is the membrane. The enzyme catalyses abieta-8,11,13-triene + reduced [NADPH--hemoprotein reductase] + O2 = ferruginol + oxidized [NADPH--hemoprotein reductase] + H2O + H(+). It catalyses the reaction ferruginol + reduced [NADPH--hemoprotein reductase] + O2 = 11-hydroxyferruginol + oxidized [NADPH--hemoprotein reductase] + H2O + H(+). The catalysed reaction is miltiradiene + 2 reduced [NADPH--hemoprotein reductase] + 2 O2 = 11-oxomiltiradiene + 2 oxidized [NADPH--hemoprotein reductase] + 3 H2O + 2 H(+). It participates in secondary metabolite biosynthesis; terpenoid biosynthesis. Its function is as follows. Monooxygenase involved in the biosynthesis of labdane-related diterpenes natural products. Catalyzes the oxidation of abietatriene to produce ferruginol. Catalyzes the oxidation of ferruginol at C-12 to produce 11-hydroxyferruginol. Ferruginol and 11-hydroxyferruginol are intermediates in the biosynthesis of carnosate, a potent antioxidant. May also convert miltiradiene into 11-oxomiltiradiene. This chain is Ferruginol synthase, found in Salvia fruticosa (Greek sage).